The chain runs to 172 residues: Achaete-scute homolog 4 (172 aa).

A bHLH domain is found at 72–124 (AFLRKRNERERQRVRCVNEGYARLRDHLPRELADKRLSKVETLRAAIDYIKHL). The disordered stretch occupies residues 144-172 (QRRAECNSDGESKASSAPSPSSEPEEGGS). Positions 145-155 (RRAECNSDGES) are enriched in basic and acidic residues. A compositionally biased stretch (low complexity) spans 156 to 165 (KASSAPSPSS).

In terms of tissue distribution, expressed in skin. 7-fold higher expression in fetal skin than in adult skin. Weak expression also detected in fetal lung, aorta and brain, and in adult stomach, kidney, ovary and breast.

It is found in the nucleus. Its function is as follows. Could be a transcriptional regulator involved in skin development. The polypeptide is Achaete-scute homolog 4 (ASCL4) (Homo sapiens (Human)).